The primary structure comprises 614 residues: Phosphomethylpyrimidine synthase (614 aa).

Substrate contacts are provided by residues Asn226, Met255, Tyr284, His320, 340–342 (SRG), 381–384 (DGLR), and Glu420. His424 lines the Zn(2+) pocket. Tyr447 serves as a coordination point for substrate. His488 is a binding site for Zn(2+). The [4Fe-4S] cluster site is built by Cys568, Cys571, and Cys576.

This sequence belongs to the ThiC family. In terms of assembly, homodimer. [4Fe-4S] cluster serves as cofactor.

The enzyme catalyses 5-amino-1-(5-phospho-beta-D-ribosyl)imidazole + S-adenosyl-L-methionine = 4-amino-2-methyl-5-(phosphooxymethyl)pyrimidine + CO + 5'-deoxyadenosine + formate + L-methionine + 3 H(+). It participates in cofactor biosynthesis; thiamine diphosphate biosynthesis. In terms of biological role, catalyzes the synthesis of the hydroxymethylpyrimidine phosphate (HMP-P) moiety of thiamine from aminoimidazole ribotide (AIR) in a radical S-adenosyl-L-methionine (SAM)-dependent reaction. The sequence is that of Phosphomethylpyrimidine synthase from Acidovorax ebreus (strain TPSY) (Diaphorobacter sp. (strain TPSY)).